A 339-amino-acid chain; its full sequence is Nitrilase 2 (339 aa).

N-acetylserine is present on serine 2. The region spanning 18-290 (VRATIVQAST…EGLITADLDL (273 aa)) is the CN hydrolase domain. The active-site Proton acceptor is the glutamate 58. Lysine 145 serves as the catalytic Proton donor. The active-site Nucleophile is cysteine 179.

Belongs to the carbon-nitrogen hydrolase superfamily. Nitrilase family.

The protein resides in the cell membrane. The catalysed reaction is a nitrile + 2 H2O = a carboxylate + NH4(+). In terms of biological role, can convert indole-3-acetonitrile to the plant hormone indole-3-acetic acid. This Arabidopsis thaliana (Mouse-ear cress) protein is Nitrilase 2 (NIT2).